Consider the following 167-residue polypeptide: MGVKKSLQTGGNLLNLLSSILTVLSTTTNYWTRQQGGHSGLWQECTHGKCSNIPCQNTVAVSAACMVLAATFSIVALGIGIRIQCREAESRRSQNTIVLLFLSGLLLLIALAVYTSKNAWKPEVFFSWSYFFGWLALPFLFIAGFCFLLADMILQSTEAISGFPVCL.

The next 4 membrane-spanning stretches (helical) occupy residues 13-32 (LLNLLSSILTVLSTTTNYWT), 61-81 (VSAACMVLAATFSIVALGIGI), 96-116 (TIVLLFLSGLLLLIALAVYTS), and 130-150 (YFFGWLALPFLFIAGFCFLLA).

Belongs to the PMP-22/EMP/MP20 family.

The protein resides in the membrane. In Mus musculus (Mouse), this protein is Claudin domain-containing protein 2 (Cldnd2).